The sequence spans 313 residues: MKLTRRLTLAAFASVLALGTAAPAFSADLIAIITPAHDNPFFKAEAVGAEAKAKELGYDTLVMSHDDDANKQSEVIDTAIGRGAKAIILDNAGADATVAAIKKAKDAGIPSFLIDREINVTGIAVAQIVSNNYQGAQLGAQEFVKLMGEKGNYAELVGREADTNAGIRSQGYHDVIDDYPDLKLVAKQSANWSQTEAYAKMETILQANPDIKGVISGNDTMAMGAIAALQAAGRKDVIVVGFDGSNDVRDSIKAGGIKATVMQPAYAQAQIAVQQADAYIKNKTVPKDEKQLMDCVLINADNADKLETFALKN.

An N-terminal signal peptide occupies residues 1–26 (MKLTRRLTLAAFASVLALGTAAPAFS). D-apiofuranose is bound by residues asparagine 39, 115 to 116 (DR), 162 to 164 (DTN), arginine 168, asparagine 218, aspartate 243, and glutamine 263.

This sequence belongs to the bacterial solute-binding protein 2 family.

The protein localises to the periplasm. Functionally, part of an ABC transporter complex involved in D-apiose import. In Rhizobium rhizogenes (strain K84 / ATCC BAA-868) (Agrobacterium radiobacter), this protein is D-apiose import binding protein.